The sequence spans 224 residues: Deoxyribose-phosphate aldolase (224 aa).

Asp92 serves as the catalytic Proton donor/acceptor. The active-site Schiff-base intermediate with acetaldehyde is Lys154. Lys183 functions as the Proton donor/acceptor in the catalytic mechanism.

The protein belongs to the DeoC/FbaB aldolase family. DeoC type 1 subfamily.

It is found in the cytoplasm. It carries out the reaction 2-deoxy-D-ribose 5-phosphate = D-glyceraldehyde 3-phosphate + acetaldehyde. The protein operates within carbohydrate degradation; 2-deoxy-D-ribose 1-phosphate degradation; D-glyceraldehyde 3-phosphate and acetaldehyde from 2-deoxy-alpha-D-ribose 1-phosphate: step 2/2. Catalyzes a reversible aldol reaction between acetaldehyde and D-glyceraldehyde 3-phosphate to generate 2-deoxy-D-ribose 5-phosphate. This chain is Deoxyribose-phosphate aldolase, found in Actinobacillus succinogenes (strain ATCC 55618 / DSM 22257 / CCUG 43843 / 130Z).